Reading from the N-terminus, the 1127-residue chain is Glutamate receptor-interacting protein 1 (1127 aa).

Glutamine 11 is lipidated: S-palmitoyl cysteine. Serine 43 carries the phosphoserine modification. PDZ domains lie at 53-136, 150-238, 252-336, 471-560, 572-657, and 672-754; these read VVEL…EYEL, TVEV…EYDV, LVEV…LPHH, EVVL…EFDV, HVKL…RKDE, and TVEL…KKQT. 3 disordered regions span residues 752 to 802, 840 to 865, and 942 to 980; these read KQTD…PSVD, KQRTSLSPVPKPRSQTYPDVGLSNED, and MARSQLGRQASFQERSSSRPHYSQTTRSNTLPSDVGRKS. Polar residues-rich tracts occupy residues 840–856 and 947–973; these read KQRTSLSPVPKPRSQTY and LGRQASFQERSSSRPHYSQTTRSNTLP. Residues 1003-1085 enclose the PDZ 7 domain; the sequence is KVTLYKDSGM…KLDLVISRNP (83 aa). Residues 1108–1127 form a disordered region; the sequence is FFQQPSHGGNLETREPTNTL.

As to quaternary structure, interacts with EFNB3, GRIA2, GRIA3, GRIPAP1/GRASP1, PPFIA1, PPFIA4, FRAS1, PTPRF, liprins-alpha and the C-terminal tail of PRLHR. Can form homomultimers or heteromultimers with GRIP2. Interacts with EFNB1, EPHA7, EPHB2, KIF5A, KIF5B and KIF5C. Forms a ternary complex with GRIA2 and CSPG4. Interacts with ATAD1 in an ATP-dependent manner. ATAD1-catalyzed ATP hydrolysis disrupts binding to ATAD1 and to GRIA2 and leads to AMPAR complex disassembly. Interacts with SLC30A9 and PLCD4. Interacts with BUD23. Forms a complex with NSG1, GRIA2 and STX12; controls the intracellular fate of AMPAR and the endosomal sorting of the GRIA2 subunit toward recycling and membrane targeting. Interacts with NSG1. In terms of processing, palmitoylation of isoform 2. In terms of tissue distribution, expressed in brain. Isoform 2 is the major isoform in brain. Expressed in oligodendrocyte lineage cells.

The protein resides in the membrane. It is found in the cytoplasmic vesicle. It localises to the perikaryon. The protein localises to the cell projection. Its subcellular location is the dendrite. The protein resides in the cytoplasm. It is found in the endomembrane system. It localises to the postsynaptic cell membrane. The protein localises to the postsynaptic density. Its subcellular location is the endoplasmic reticulum membrane. In terms of biological role, may play a role as a localized scaffold for the assembly of a multiprotein signaling complex and as mediator of the trafficking of its binding partners at specific subcellular location in neurons. Through complex formation with NSG1, GRIA2 and STX12 controls the intracellular fate of AMPAR and the endosomal sorting of the GRIA2 subunit toward recycling and membrane targeting. This chain is Glutamate receptor-interacting protein 1 (Grip1), found in Mus musculus (Mouse).